The chain runs to 507 residues: MFS-type transporter acdC (507 aa).

The disordered stretch occupies residues 1–50; sequence MSPNAPAVDIGAAPSLDTPEGDTKQPAEDHVEKDSNLVDWDGPDDPEHPQ. Basic and acidic residues predominate over residues 21–36; sequence GDTKQPAEDHVEKDSN. Asparagine 51 is a glycosylation site (N-linked (GlcNAc...) asparagine). A helical transmembrane segment spans residues 58–78; the sequence is WGITFSLASMTMWITFSSSVL. N-linked (GlcNAc...) asparagine glycosylation occurs at asparagine 90. The next 5 helical transmembrane spans lie at 95-115, 125-145, 155-175, 186-206, and 215-235; these read VMPLATTLVIFGFALGPLCWA, LPTFLGYGVFAIFQVPVAVAP, FFVGVFGSSALSVGPGVMADI, PFFFAANLLGPILGPIIGGFI, and WTAWLTLITSIFFGVLALLIV. Residue asparagine 257 is glycosylated (N-linked (GlcNAc...) asparagine). The next 6 helical transmembrane spans lie at 290–310, 328–348, 371–391, 395–415, 442–462, and 466–486; these read PILICFTVYLSLIYGILYLFL, IAGLPFLGILVGMVLGIGIII, LVEMMLTSITMPIGLFWFGWA, HWMVQTIAGVPLGIGLFVLFM, FLGGSFPLFATAMYHNLGVDW, and ILGFISVAMVPIPFAFYIFGA.

Belongs to the major facilitator superfamily. CAR1 family.

It is found in the membrane. Functionally, MFS-type transporter; part of the gene cluster that mediates the biosynthesis of aspcandine, a pyrrolobenzazepine alkaloid. The sequence is that of MFS-type transporter acdC from Aspergillus candidus.